A 252-amino-acid polypeptide reads, in one-letter code: Triosephosphate isomerase (252 aa).

Position 10–12 (Asn10–Lys12) interacts with substrate. The active-site Electrophile is His96. Glu168 (proton acceptor) is an active-site residue. Residues Gly174, Ser214, and Gly235 to Gly236 contribute to the substrate site.

It belongs to the triosephosphate isomerase family. As to quaternary structure, homodimer.

Its subcellular location is the cytoplasm. The catalysed reaction is D-glyceraldehyde 3-phosphate = dihydroxyacetone phosphate. It participates in carbohydrate biosynthesis; gluconeogenesis. Its pathway is carbohydrate degradation; glycolysis; D-glyceraldehyde 3-phosphate from glycerone phosphate: step 1/1. Involved in the gluconeogenesis. Catalyzes stereospecifically the conversion of dihydroxyacetone phosphate (DHAP) to D-glyceraldehyde-3-phosphate (G3P). This chain is Triosephosphate isomerase, found in Streptococcus pyogenes serotype M1.